A 145-amino-acid polypeptide reads, in one-letter code: Ribonuclease P protein component (145 aa).

The interval 119–145 is disordered; sequence PLPAAPGTMPPARTVRPSSPSPTEPEL.

It belongs to the RnpA family. Consists of a catalytic RNA component (M1 or rnpB) and a protein subunit.

The enzyme catalyses Endonucleolytic cleavage of RNA, removing 5'-extranucleotides from tRNA precursor.. Its function is as follows. RNaseP catalyzes the removal of the 5'-leader sequence from pre-tRNA to produce the mature 5'-terminus. It can also cleave other RNA substrates such as 4.5S RNA. The protein component plays an auxiliary but essential role in vivo by binding to the 5'-leader sequence and broadening the substrate specificity of the ribozyme. This is Ribonuclease P protein component from Xanthomonas euvesicatoria pv. vesicatoria (strain 85-10) (Xanthomonas campestris pv. vesicatoria).